The chain runs to 281 residues: Pantothenate synthetase (281 aa).

26-33 (MGYLHQGH) is a binding site for ATP. Histidine 33 acts as the Proton donor in catalysis. A (R)-pantoate-binding site is contributed by glutamine 57. Glutamine 57 serves as a coordination point for beta-alanine. 143–146 (GQKD) provides a ligand contact to ATP. A (R)-pantoate-binding site is contributed by glutamine 149. Residues valine 172 and 180 to 183 (LSSR) contribute to the ATP site.

It belongs to the pantothenate synthetase family. In terms of assembly, homodimer.

Its subcellular location is the cytoplasm. The catalysed reaction is (R)-pantoate + beta-alanine + ATP = (R)-pantothenate + AMP + diphosphate + H(+). The protein operates within cofactor biosynthesis; (R)-pantothenate biosynthesis; (R)-pantothenate from (R)-pantoate and beta-alanine: step 1/1. In terms of biological role, catalyzes the condensation of pantoate with beta-alanine in an ATP-dependent reaction via a pantoyl-adenylate intermediate. The protein is Pantothenate synthetase of Chloroflexus aurantiacus (strain ATCC 29366 / DSM 635 / J-10-fl).